The chain runs to 98 residues: Large ribosomal subunit protein uL23 (98 aa).

Belongs to the universal ribosomal protein uL23 family. Part of the 50S ribosomal subunit. Contacts protein L29, and trigger factor when it is bound to the ribosome.

Its function is as follows. One of the early assembly proteins it binds 23S rRNA. One of the proteins that surrounds the polypeptide exit tunnel on the outside of the ribosome. Forms the main docking site for trigger factor binding to the ribosome. The sequence is that of Large ribosomal subunit protein uL23 from Rickettsia rickettsii (strain Iowa).